We begin with the raw amino-acid sequence, 811 residues long: Mitochondrial intermediate peptidase (811 aa).

A mitochondrion-targeting transit peptide spans 1 to 25; that stretch reads MRSGSRLSNYLVRLSGRVSFTQKRS. Positions 423–450 are disordered; that stretch reads TENGEKASTDTSTSTTTSTTTTDSTTTT. The segment covering 431–450 has biased composition (low complexity); it reads TDTSTSTTTSTTTTDSTTTT. H593 serves as a coordination point for Zn(2+). The active site involves E594. Positions 597 and 600 each coordinate Zn(2+).

This sequence belongs to the peptidase M3 family. Requires Zn(2+) as cofactor.

The protein resides in the mitochondrion matrix. It carries out the reaction Release of an N-terminal octapeptide as second stage of processing of some proteins imported into the mitochondrion.. Cleaves proteins, imported into the mitochondrion, to their mature size. While most mitochondrial precursor proteins are processed to the mature form in one step by mitochondrial processing peptidase (MPP), the sequential cleavage by MIP of an octapeptide after initial processing by MPP is a required step for a subgroup of nuclear-encoded precursor proteins destined for the matrix or the inner membrane. In Lodderomyces elongisporus (strain ATCC 11503 / CBS 2605 / JCM 1781 / NBRC 1676 / NRRL YB-4239) (Yeast), this protein is Mitochondrial intermediate peptidase (OCT1).